The primary structure comprises 320 residues: Protein phosphatase PTC7 homolog fig (320 aa).

Residues 49–315 (PYLVTAVQGR…DDITLILASV (267 aa)) enclose the PPM-type phosphatase domain. Mn(2+)-binding residues include D93, G94, and D238.

Belongs to the PP2C family. Mg(2+) is required as a cofactor. The cofactor is Mn(2+).

It carries out the reaction O-phospho-L-seryl-[protein] + H2O = L-seryl-[protein] + phosphate. The enzyme catalyses O-phospho-L-threonyl-[protein] + H2O = L-threonyl-[protein] + phosphate. This Drosophila yakuba (Fruit fly) protein is Protein phosphatase PTC7 homolog fig.